Reading from the N-terminus, the 120-residue chain is NAD(P)H-quinone oxidoreductase subunit 3, chloroplastic (120 aa).

Helical transmembrane passes span 9 to 29, 64 to 84, and 88 to 108; these read IFWA…FVSG, MFAL…PWAM, and VLGI…IVGL.

It belongs to the complex I subunit 3 family. NDH is composed of at least 16 different subunits, 5 of which are encoded in the nucleus.

Its subcellular location is the plastid. It is found in the chloroplast thylakoid membrane. The catalysed reaction is a plastoquinone + NADH + (n+1) H(+)(in) = a plastoquinol + NAD(+) + n H(+)(out). It catalyses the reaction a plastoquinone + NADPH + (n+1) H(+)(in) = a plastoquinol + NADP(+) + n H(+)(out). Functionally, NDH shuttles electrons from NAD(P)H:plastoquinone, via FMN and iron-sulfur (Fe-S) centers, to quinones in the photosynthetic chain and possibly in a chloroplast respiratory chain. The immediate electron acceptor for the enzyme in this species is believed to be plastoquinone. Couples the redox reaction to proton translocation, and thus conserves the redox energy in a proton gradient. This Daucus carota (Wild carrot) protein is NAD(P)H-quinone oxidoreductase subunit 3, chloroplastic.